Reading from the N-terminus, the 240-residue chain is 5-oxoprolinase subunit B (240 aa).

ATP is bound at residue 194-201 (GWQLIGKT).

This sequence belongs to the PxpB family. Forms a complex composed of PxpA, PxpB and PxpC. Interacts with PxpC (KipA). Interaction with PxpC prevents the inhibitory action of PxpB (KipI). Interacts with KinA. Two PxpB monomers bind via their C-domains at a conserved proline in the KinA dimerization and histidine-phosphotransfer (DHp) domain.

The catalysed reaction is 5-oxo-L-proline + ATP + 2 H2O = L-glutamate + ADP + phosphate + H(+). Its function is as follows. Catalyzes the cleavage of 5-oxoproline to form L-glutamate coupled to the hydrolysis of ATP to ADP and inorganic phosphate. In addition, is a potent inhibitor of the autophosphorylation reaction of kinase A (kinA) and its reverse reaction, but does not inhibit phosphate transfer to the Spo0F response regulator once kinase A is phosphorylated. Is an inhibitor of the catalytic domain of kinase A affecting the ATP/ADP reactions and not the phosphotransferase functions of this domain. The inhibition is non-competitive with respect to ATP. The protein is 5-oxoprolinase subunit B of Bacillus subtilis (strain 168).